The following is a 447-amino-acid chain: Drebrin-like protein A (447 aa).

The ADF-H domain maps to 2 to 133 (SVNLSKNGAA…EPESIMEKVA (132 aa)). 2 disordered regions span residues 141-160 (NFHK…VGSV) and 184-368 (KDEE…TENQ). The stretch at 180–245 (AKAEKDEEER…EQEETEKQQT (66 aa)) forms a coiled coil. Over residues 184–242 (KDEEERRMEENRRANSEKDRLERERKEREQREAETREQRFRERAKEIDAQRKEQEETEK) the composition is skewed to basic and acidic residues. A compositionally biased stretch (polar residues) spans 246–255 (VPASQRSVNP). Positions 319 to 328 (PESPVPPVSH) are enriched in pro residues. Over residues 345 to 365 (QEEENIYQDATEDQNIYEDTT) the composition is skewed to acidic residues. Positions 388–447 (EKGVCARALYDYQAADDTEISFDPDDLITQIQFIDEGWWRGFSPAGHFGMFPANYVELLE) constitute an SH3 domain.

It belongs to the ABP1 family.

It localises to the cytoplasm. It is found in the cytoskeleton. Its subcellular location is the cell projection. The protein localises to the lamellipodium. The protein resides in the ruffle. It localises to the cell cortex. It is found in the cytosol. Its subcellular location is the synapse. The protein localises to the perikaryon. The protein resides in the neuron projection. It localises to the cell membrane. It is found in the cytoplasmic vesicle. Its subcellular location is the clathrin-coated vesicle membrane. The protein localises to the golgi apparatus membrane. The protein resides in the podosome. It localises to the early endosome. It is found in the dendrite. Its subcellular location is the postsynaptic density. Its function is as follows. Adapter protein that binds F-actin and dynamin, and thereby plays a role in receptor-mediated endocytosis. Plays a role in the reorganization of the actin cytoskeleton, formation of cell projections, such as neurites, in neuron morphogenesis and synapse formation. Does not bind G-actin and promote actin polymerization by itself, but excerts its functions by interaction with other proteins. Required for the formation of organized podosome rosettes. The polypeptide is Drebrin-like protein A (dbnl-a) (Xenopus laevis (African clawed frog)).